We begin with the raw amino-acid sequence, 344 residues long: MVSSNGSQCPYDDSFKYTLYGCMFSMVFVLGLISNCVAIYIFICALKVRNETTTYMINLAMSDLLFVFTLPFRIFYFATRNWPFGDLLCKISVMLFYTNMYGSILFLTCISVDRFLAIVYPFKSKTLRTKRNAKIVCIAVWFTVMGGSAPAVFFQSTHSQGNNTSEACFENFPAATWKTYLSRIVIFIEIVGFFIPLILNVTCSSMVLRTLNKPVTLSRSKMNKTKVLKMIFVHLVIFCFCFVPYNINLILYSLMRTQTFVNCSVVAAVRTMYPITLCIAVSNCCFDPIVYYFTSDTIQNSIKMKNWSVRRSDSRFSEVQGTENFIQHNLQTLKNKIFDNESAI.

Residues 1–25 (MVSSNGSQCPYDDSFKYTLYGCMFS) are Extracellular-facing. The N-linked (GlcNAc...) asparagine glycan is linked to N5. A helical membrane pass occupies residues 26–46 (MVFVLGLISNCVAIYIFICAL). Over 47 to 56 (KVRNETTTYM) the chain is Cytoplasmic. Residues 57–77 (INLAMSDLLFVFTLPFRIFYF) form a helical membrane-spanning segment. Topologically, residues 78-90 (ATRNWPFGDLLCK) are extracellular. C89 and C168 are joined by a disulfide. A helical membrane pass occupies residues 91–111 (ISVMLFYTNMYGSILFLTCIS). At 112-134 (VDRFLAIVYPFKSKTLRTKRNAK) the chain is on the cytoplasmic side. A helical transmembrane segment spans residues 135–155 (IVCIAVWFTVMGGSAPAVFFQ). The Extracellular segment spans residues 156 to 183 (STHSQGNNTSEACFENFPAATWKTYLSR). Residues N162 and N163 are each glycosylated (N-linked (GlcNAc...) asparagine). A helical membrane pass occupies residues 184–204 (IVIFIEIVGFFIPLILNVTCS). The Cytoplasmic portion of the chain corresponds to 205-230 (SMVLRTLNKPVTLSRSKMNKTKVLKM). Residues 231-251 (IFVHLVIFCFCFVPYNINLIL) form a helical membrane-spanning segment. The Extracellular portion of the chain corresponds to 252 to 272 (YSLMRTQTFVNCSVVAAVRTM). N-linked (GlcNAc...) asparagine glycosylation occurs at N262. A helical transmembrane segment spans residues 273–293 (YPITLCIAVSNCCFDPIVYYF). C284 carries the S-palmitoyl cysteine lipid modification. Residues 294 to 344 (TSDTIQNSIKMKNWSVRRSDSRFSEVQGTENFIQHNLQTLKNKIFDNESAI) lie on the Cytoplasmic side of the membrane.

It belongs to the G-protein coupled receptor 1 family. As to expression, ubiquitously expressed. Detected in the hair follicles and skin (at protein level).

Its subcellular location is the cell membrane. In terms of biological role, binds to oleoyl-L-alpha-lysophosphatidic acid (LPA). Intracellular cAMP is involved in the receptor activation. Important for the maintenance of hair growth and texture. The chain is Lysophosphatidic acid receptor 6 (Lpar6) from Mus musculus (Mouse).